Here is a 147-residue protein sequence, read N- to C-terminus: Diaminohydroxyphosphoribosylamino-pyrimidine deaminase (147 aa).

Residues 1–123 form the CMP/dCMP-type deaminase domain; the sequence is MNDIFYMKRA…YLKKHGICVK (123 aa). His-50 is a binding site for Zn(2+). The active-site Proton donor is Glu-52. Zn(2+)-binding residues include Cys-75 and Cys-84.

This sequence belongs to the cytidine and deoxycytidylate deaminase family. It depends on Zn(2+) as a cofactor.

It carries out the reaction 2,5-diamino-6-hydroxy-4-(5-phosphoribosylamino)-pyrimidine + H2O + H(+) = 5-amino-6-(5-phospho-D-ribosylamino)uracil + NH4(+). The protein operates within cofactor biosynthesis; riboflavin biosynthesis; 5-amino-6-(D-ribitylamino)uracil from GTP: step 2/4. The sequence is that of Diaminohydroxyphosphoribosylamino-pyrimidine deaminase (ribD1) from Buchnera aphidicola subsp. Acyrthosiphon pisum (strain APS) (Acyrthosiphon pisum symbiotic bacterium).